Reading from the N-terminus, the 1101-residue chain is MKNDVVRWSRQPTSNTTNSSSSSRSDSNSTHKHRSKSNKLNARQLGSNAARSCQQRSSVATTLEDEQQTIIECDIGNFNFDCNLFKTSFLTQHKQKRSGKSSSKSKSNRSRPLAKTKAVFLLALQFSAVVFLCNINVGFVAGSVATAASSAGGSSPAAPSSAPSSPPTVAVPPPPPPSSALKVDPNGQSPVLPPYVLDYETGGKAKLTPNNGKFGQSGSSGSNNNHIVGHYTHTWAVHIPNGDNGMADAVAKDHGFVNLGKIFDDHYHFAHHKVSKRSLSPATHHQTRLDDDDRVHWAKQQRAKSRSKRDFIRMRPSRTSSRAMSMVDAMSFNDSKWPQMWYLNRGGGLDMNVIPAWKMGITGKGVVVTILDDGLESDHPDIQDNYDPKASYDVNSHDDDPMPHYDMTDSNRHGTRCAGEVAATANNSFCAVGIAYGASVGGVRMLDGDVTDAVEARSLSLNPQHIDIYSASWGPDDDGKTVDGPGELASRAFIEGTTKGRGGKGSIFIWASGNGGREQDNCNCDGYTNSIWTLSISSATEEGHVPWYSEKCSSTLATTYSSGGQGEKQVVTTDLHHSCTVSHTGTSASAPLAAGIAALVLQSNQNLTWRDLQHIVVRTAKPANLKDPSWSRNGVGRRVSHSFGYGLMDAAEMVRVARNWKAVPEQQRCEINAPHVDKVIPPRTHITLQLTVNHCRSVNYLEHVQAKITLTSQRRGDIQLFLRSPANTSVTLLTPRIHDNSRSGFNQWPFMSVHTWGESPQGNWQLEIHNEGRYMAQITQWDMIFYGTETPAQPDDVANPSQSNQFNLYGNDMAHNDVEYDSTGQWRNMQQVGEVGMTRDHSNTAACLKWSDRKCLECNDSAYMFEDQCYDVCPVHTYPLDKFQAEEDEQDDEVTRGPVNPYSSSPMDHSLLMSNSLDDKQDPLQAEDRRRRSSLTQLVEVPSRVCAACDRSCLECYGALASQCSTCSPGSQLRKILNETFCYAYVVRSTGMASVVDISKMDDRDTQQYMTGTTVLLLVSVIFTLMGVAVAGGIVYHRRAMARSNELYSRVSLVPGDESDSDEDELFTAHFPARKSGVNIYRDEAPSEKIFEEDEISHLVP.

A disordered region spans residues 1–57 (MKNDVVRWSRQPTSNTTNSSSSSRSDSNSTHKHRSKSNKLNARQLGSNAARSCQQRS). The span at 13–28 (TSNTTNSSSSSRSDSN) shows a compositional bias: low complexity. Asn15, Asn18, and Asn28 each carry an N-linked (GlcNAc...) asparagine glycan. The span at 38 to 57 (NKLNARQLGSNAARSCQQRS) shows a compositional bias: polar residues. Asn108 carries N-linked (GlcNAc...) asparagine glycosylation. Residues 119–139 (VFLLALQFSAVVFLCNINVGF) traverse the membrane as a helical segment. Residues 150–163 (SAGGSSPAAPSSAP) are compositionally biased toward low complexity. The tract at residues 150–187 (SAGGSSPAAPSSAPSSPPTVAVPPPPPPSSALKVDPNG) is disordered. Residues 164–178 (SSPPTVAVPPPPPPS) are compositionally biased toward pro residues. An N-linked (GlcNAc...) asparagine glycan is attached at Asn333. Positions 340 to 654 (MWYLNRGGGL…YGLMDAAEMV (315 aa)) constitute a Peptidase S8 domain. Catalysis depends on charge relay system residues Asp372 and His413. N-linked (GlcNAc...) asparagine glycosylation occurs at Asn426. Disulfide bonds link Cys430–Cys579 and Cys522–Cys552. Ser587 serves as the catalytic Charge relay system. Residue Asn606 is glycosylated (N-linked (GlcNAc...) asparagine). Residues 662-791 (AVPEQQRCEI…DMIFYGTETP (130 aa)) form the P/Homo B domain. Cys669 and Cys695 are joined by a disulfide. Residues Asn727 and Asn859 are each glycosylated (N-linked (GlcNAc...) asparagine). A disordered region spans residues 886 to 915 (EEDEQDDEVTRGPVNPYSSSPMDHSLLMSN). Residues 901–915 (PYSSSPMDHSLLMSN) show a composition bias toward polar residues. N-linked (GlcNAc...) asparagine glycosylation is present at Asn978. Residues 1014-1034 (TVLLLVSVIFTLMGVAVAGGI) traverse the membrane as a helical segment.

It belongs to the peptidase S8 family. Furin subfamily. Requires Ca(2+) as cofactor. As to expression, in adults, isoform 1-CRR is expressed in CNS, fat body, and female reproductive tissues, and in embryos, in anal pads, hindgut, developing antennomaxillary complex, oenocytes, clipeolabrum, pharynx, trachea, CNS and developing posterior spiracles.

Its subcellular location is the golgi apparatus membrane. The catalysed reaction is Release of mature proteins from their proproteins by cleavage of -Arg-Xaa-Yaa-Arg-|-Zaa- bonds, where Xaa can be any amino acid and Yaa is Arg or Lys. Releases albumin, complement component C3 and von Willebrand factor from their respective precursors.. In terms of biological role, furin is likely to represent the ubiquitous endoprotease activity within constitutive secretory pathways and capable of cleavage at the RX(K/R)R consensus motif. The polypeptide is Furin-like protease 1, isoform 1-CRR (Fur1) (Drosophila melanogaster (Fruit fly)).